The chain runs to 207 residues: MVKSDNITWHQSQVSKAERQALNHHKSVVLWFTGLSGSGKSTIANAVEKALFDQQVGSYVLDGDNMRFGLNKNLGFSAEDREENIRRIGEVAKLFVDAGVITLTAFISPYRADRDKVRANLEVDEFIEVFVDTPLEVCEQRDVKQLYAKARRGEITGFTGIDAPYEAPIDPEITIDTSKQPLTASVQQVLNYLAEHHYVSLVTANEN.

ATP is bound at residue 34–41; sequence GLSGSGKS. The active-site Phosphoserine intermediate is S108.

This sequence belongs to the APS kinase family.

It catalyses the reaction adenosine 5'-phosphosulfate + ATP = 3'-phosphoadenylyl sulfate + ADP + H(+). It functions in the pathway sulfur metabolism; hydrogen sulfide biosynthesis; sulfite from sulfate: step 2/3. Functionally, catalyzes the synthesis of activated sulfate. This Lactiplantibacillus plantarum (strain ATCC BAA-793 / NCIMB 8826 / WCFS1) (Lactobacillus plantarum) protein is Adenylyl-sulfate kinase.